A 271-amino-acid polypeptide reads, in one-letter code: Mannosyl-3-phosphoglycerate phosphatase (271 aa).

Residue aspartate 13 is the Nucleophile of the active site. Positions 13, 15, and 214 each coordinate Mg(2+).

Belongs to the HAD-like hydrolase superfamily. MPGP family. The cofactor is Mg(2+).

The protein localises to the cytoplasm. It carries out the reaction 2-O-(alpha-D-mannosyl)-3-phosphoglycerate + H2O = (2R)-2-O-(alpha-D-mannosyl)-glycerate + phosphate. This is Mannosyl-3-phosphoglycerate phosphatase from Escherichia coli O7:K1 (strain IAI39 / ExPEC).